The sequence spans 238 residues: Expansin-like protein 5 (238 aa).

Residues 1-21 (MRINFKLILIILTSFYGIINC) form the signal peptide. Positions 45–145 (NGNCGFGKLT…VKVPCRVSGN (101 aa)) constitute an Expansin-like EG45 domain. Disulfide bonds link cysteine 48-cysteine 78 and cysteine 81-cysteine 140. The N-linked (GlcNAc...) asparagine glycan is linked to asparagine 89.

It belongs to the expansin family. Expansin A subfamily.

It localises to the secreted. Functionally, may serve to lubricate the movement of the cellulose microfibrils during cell growth and wall extension and/or may serve to maintain the fluid state of the slug cell wall. The protein is Expansin-like protein 5 (expl5) of Dictyostelium discoideum (Social amoeba).